Consider the following 320-residue polypeptide: Putative olfactory receptor 2W5 pseudogene (320 aa).

The N-linked (GlcNAc...) asparagine glycan is linked to asparagine 5. 4 helical membrane-spanning segments follow: residues 30–50, 58–78, 98–118, and 140–160; these read VILI…LLLV, PMYF…ASIA, VAQL…LVVM, and LCLQ…FIMC. A disulfide bridge connects residues cysteine 97 and cysteine 179. The disordered stretch occupies residues 267 to 320; the sequence is LPRSGEVPDSLLHHRHSQHQPPHLHFEEQGCEGDHEETSGVGERGWGASTRGTL. Positions 290 to 304 are enriched in basic and acidic residues; the sequence is LHFEEQGCEGDHEET.

This sequence belongs to the G-protein coupled receptor 1 family.

It is found in the cell membrane. Functionally, odorant receptor. The sequence is that of Putative olfactory receptor 2W5 pseudogene from Homo sapiens (Human).